A 303-amino-acid polypeptide reads, in one-letter code: MKSNKIKYLGCFVGATKPDFMLGMVKTVVDYGATSFMFYSGPPQSFRRTPTAQFKLDLAKAYLAKHNLGDLGDNYVVHAPYLINLANGDSTKRERSFNFFLDELKRTNELGAKYFVLHPGSALNVKDKTQALDHLATELNRAISMTKDTIICLETMADKGQQICSKFEELRYVIDQISDKSRIGVCFDTCHVHDAGYDLAKTQELIDHFDQVIGLKYLYVIHLNDSKNPMGARKDRHANIGYGKIGFENLLNFIYHKEICNKIIILETPWIDDPIRGEVPLYKEEIEMIRNKKFVEGLVNEES.

Positions 78, 118, 154, 188, 191, 222, 235, 237, and 267 each coordinate Zn(2+).

The protein belongs to the AP endonuclease 2 family. Zn(2+) serves as cofactor.

The enzyme catalyses Endonucleolytic cleavage to 5'-phosphooligonucleotide end-products.. In terms of biological role, endonuclease IV plays a role in DNA repair. It cleaves phosphodiester bonds at apurinic or apyrimidinic (AP) sites, generating a 3'-hydroxyl group and a 5'-terminal sugar phosphate. The chain is Probable endonuclease 4 from Mycoplasmoides gallisepticum (strain R(low / passage 15 / clone 2)) (Mycoplasma gallisepticum).